Here is a 122-residue protein sequence, read N- to C-terminus: Large ribosomal subunit protein uL14 (122 aa).

This sequence belongs to the universal ribosomal protein uL14 family. In terms of assembly, part of the 50S ribosomal subunit. Forms a cluster with proteins L3 and L19. In the 70S ribosome, L14 and L19 interact and together make contacts with the 16S rRNA in bridges B5 and B8.

Functionally, binds to 23S rRNA. Forms part of two intersubunit bridges in the 70S ribosome. This Halothermothrix orenii (strain H 168 / OCM 544 / DSM 9562) protein is Large ribosomal subunit protein uL14.